Here is a 442-residue protein sequence, read N- to C-terminus: Protoheme IX farnesyltransferase (442 aa).

The tract at residues 1–167 (MGVYSLLVLG…AYVQLMKPRL (167 aa)) is unknown. 11 helical membrane-spanning segments follow: residues 49-69 (AAAL…RTGA), 76-96 (AVTL…YTAM), 106-126 (VHLT…AWTL), 167-187 (LMWL…SQLG), 194-214 (AATV…SGTF), 245-265 (LAFG…VNLL), 267-287 (AVLG…VLKP), 308-328 (WVAV…VIFL), 365-385 (HIVY…ELTG), 386-406 (LGPL…YFAI), and 421-441 (FHAS…DTMV). The prenyltransferase stretch occupies residues 168–439 (MWLLCLVAGA…CLLVAVVLDT (272 aa)).

It in the C-terminal section; belongs to the UbiA prenyltransferase family. Protoheme IX farnesyltransferase subfamily.

Its subcellular location is the cell membrane. The enzyme catalyses heme b + (2E,6E)-farnesyl diphosphate + H2O = Fe(II)-heme o + diphosphate. The protein operates within porphyrin-containing compound metabolism; heme O biosynthesis; heme O from protoheme: step 1/1. Converts heme B (protoheme IX) to heme O by substitution of the vinyl group on carbon 2 of heme B porphyrin ring with a hydroxyethyl farnesyl side group. This chain is Protoheme IX farnesyltransferase (ctaB), found in Halobacterium salinarum (strain ATCC 700922 / JCM 11081 / NRC-1) (Halobacterium halobium).